An 87-amino-acid chain; its full sequence is UPF0248 protein TSIB_1445 (87 aa).

The protein belongs to the UPF0248 family.

The chain is UPF0248 protein TSIB_1445 from Thermococcus sibiricus (strain DSM 12597 / MM 739).